The following is a 177-amino-acid chain: Nucleoside triphosphate/diphosphate phosphatase (177 aa).

The Proton donor role is filled by Arg-23. Mg(2+) contacts are provided by Asn-87, Asp-103, Asp-105, Asp-107, Asp-120, and Glu-123.

The protein belongs to the Ntdp family. Requires Mg(2+) as cofactor.

It catalyses the reaction a ribonucleoside 5'-triphosphate + H2O = a ribonucleoside 5'-diphosphate + phosphate + H(+). The enzyme catalyses a ribonucleoside 5'-diphosphate + H2O = a ribonucleoside 5'-phosphate + phosphate + H(+). In terms of biological role, has nucleoside phosphatase activity towards nucleoside triphosphates and nucleoside diphosphates. This Streptococcus pneumoniae (strain ATCC 700669 / Spain 23F-1) protein is Nucleoside triphosphate/diphosphate phosphatase.